We begin with the raw amino-acid sequence, 89 residues long: Large ribosomal subunit protein eL34 (89 aa).

The tract at residues 1-22 is disordered; that stretch reads MPAPRYKSGSSKKVYRKAPGNS.

It belongs to the eukaryotic ribosomal protein eL34 family.

This chain is Large ribosomal subunit protein eL34, found in Methanococcus maripaludis (strain DSM 14266 / JCM 13030 / NBRC 101832 / S2 / LL).